Consider the following 465-residue polypeptide: Ribosomal oxygenase 2 (465 aa).

Residues 139 to 271 (QPQRFKDELW…NSWGDYLLDS (133 aa)) form the JmjC domain. Fe cation is bound by residues H179, D181, and H240. S309 is subject to Phosphoserine.

The protein belongs to the ROX family. MINA53 subfamily. The cofactor is Fe(2+).

It localises to the nucleus. It is found in the nucleolus. The catalysed reaction is L-histidyl-[ribosomal protein uL15] + 2-oxoglutarate + O2 = (3S)-3-hydroxy-L-histidyl-[ribosomal protein uL15] + succinate + CO2. The enzyme catalyses L-histidyl-[protein] + 2-oxoglutarate + O2 = (3S)-3-hydroxy-L-histidyl-[protein] + succinate + CO2. Its function is as follows. Oxygenase that can act as both a histone lysine demethylase and a ribosomal histidine hydroxylase. Is involved in the demethylation of trimethylated 'Lys-9' on histone H3 (H3K9me3), leading to an increase in ribosomal RNA expression. Also catalyzes the hydroxylation of 60S ribosomal protein L27a on 'His-39'. May play an important role in cell growth and survival. May be involved in ribosome biogenesis, most likely during the assembly process of pre-ribosomal particles. The chain is Ribosomal oxygenase 2 from Rattus norvegicus (Rat).